The following is a 149-amino-acid chain: MDQKQLQALVEQISIRVFGKPFRHTAFFNPRLRTTGGRYMLQTHNIELNKKHYEQFGEEELIAIIKHELCHYHLHLEGKGYRHRDRDFRELLQKVGAPRYCRPLARNTKAPKTIYTYICTSCGLTYRRKRRINIDRYVCGRCRSKLKLS.

Residues 6–147 (LQALVEQISI…VCGRCRSKLK (142 aa)) form the SprT-like domain. Residue His67 participates in Zn(2+) binding. The active site involves Glu68. Residue His71 participates in Zn(2+) binding.

This sequence belongs to the SprT family. Zn(2+) is required as a cofactor.

Its subcellular location is the cytoplasm. The polypeptide is Protein SprT-like (Geobacillus kaustophilus (strain HTA426)).